The following is a 188-amino-acid chain: Small ribosomal subunit protein bS18c (188 aa).

Positions 1 to 19 (MNNQSFNNFSQVNSNSSFF) are enriched in low complexity. Positions 1–79 (MNNQSFNNFS…TSNKRKVLSV (79 aa)) are disordered. Over residues 25 to 71 (NLQNTNLEMTNGTNPPSSFSKQTPQKRQSFGTNTNFSKGNSSRGSTS) the composition is skewed to polar residues.

This sequence belongs to the bacterial ribosomal protein bS18 family. As to quaternary structure, part of the 30S ribosomal subunit.

The protein localises to the plastid. It localises to the chloroplast. This chain is Small ribosomal subunit protein bS18c, found in Tetradesmus obliquus (Green alga).